Reading from the N-terminus, the 456-residue chain is tRNA modification GTPase MnmE (456 aa).

3 residues coordinate (6S)-5-formyl-5,6,7,8-tetrahydrofolate: R23, E85, and R124. The TrmE-type G domain occupies 220–376; the sequence is GVAVLIAGKP…LKESIFQTFI (157 aa). N230 serves as a coordination point for K(+). GTP-binding positions include 230-235, 249-255, and 274-277; these read NVGKSS, TSVPGTT, and DTAG. S234 provides a ligand contact to Mg(2+). 3 residues coordinate K(+): T249, V251, and T254. Residue T255 coordinates Mg(2+). A (6S)-5-formyl-5,6,7,8-tetrahydrofolate-binding site is contributed by K456.

Belongs to the TRAFAC class TrmE-Era-EngA-EngB-Septin-like GTPase superfamily. TrmE GTPase family. In terms of assembly, homodimer. Heterotetramer of two MnmE and two MnmG subunits. K(+) is required as a cofactor.

It localises to the cytoplasm. Functionally, exhibits a very high intrinsic GTPase hydrolysis rate. Involved in the addition of a carboxymethylaminomethyl (cmnm) group at the wobble position (U34) of certain tRNAs, forming tRNA-cmnm(5)s(2)U34. The protein is tRNA modification GTPase MnmE of Geobacter sulfurreducens (strain ATCC 51573 / DSM 12127 / PCA).